Consider the following 260-residue polypeptide: Vesicle-associated membrane protein/synaptobrevin-binding protein (260 aa).

Over 1–238 (MASHEQALIL…SPAPAAAVRA (238 aa)) the chain is Cytoplasmic. Residues 7–125 (ALILEPAGEL…MDTKLRCVFE (119 aa)) enclose the MSP domain. The tract at residues 127–177 (PDGSHQAPASDASRATDAGAHFSESALEDPTVASRKTETQSPKRVGAVGSA) is disordered. Residues 172–216 (GAVGSAGEDVKKLQHELKKAQSEITSLKGENSQLKDEGIRLRKVA) adopt a coiled-coil conformation. A helical; Anchor for type IV membrane protein membrane pass occupies residues 239–259 (FPPVVYVVAAIILGLIIGKFL).

It belongs to the VAMP-associated protein (VAP) (TC 9.B.17) family. In terms of tissue distribution, detected only in the central nervous system and the gill of aplysia.

Its subcellular location is the membrane. It is found in the synapse. The protein localises to the synaptosome. Its function is as follows. Required for neurotransmitter release. Interacts with VAMP. The chain is Vesicle-associated membrane protein/synaptobrevin-binding protein from Aplysia californica (California sea hare).